The primary structure comprises 350 residues: Farnesyl pyrophosphate synthase (350 aa).

Isopentenyl diphosphate is bound by residues lysine 55, arginine 58, and glutamine 94. Residues aspartate 101 and aspartate 105 each coordinate Mg(2+). A dimethylallyl diphosphate-binding site is contributed by arginine 110. Arginine 111 is an isopentenyl diphosphate binding site. The dimethylallyl diphosphate site is built by lysine 198, threonine 199, glutamine 237, lysine 254, and lysine 263.

This sequence belongs to the FPP/GGPP synthase family. Mg(2+) serves as cofactor.

It is found in the cytoplasm. It catalyses the reaction isopentenyl diphosphate + dimethylallyl diphosphate = (2E)-geranyl diphosphate + diphosphate. It carries out the reaction isopentenyl diphosphate + (2E)-geranyl diphosphate = (2E,6E)-farnesyl diphosphate + diphosphate. It functions in the pathway isoprenoid biosynthesis; farnesyl diphosphate biosynthesis; farnesyl diphosphate from geranyl diphosphate and isopentenyl diphosphate: step 1/1. It participates in isoprenoid biosynthesis; geranyl diphosphate biosynthesis; geranyl diphosphate from dimethylallyl diphosphate and isopentenyl diphosphate: step 1/1. Functionally, catalyzes the sequential condensation of isopentenyl pyrophosphate with the allylic pyrophosphates, dimethylallyl pyrophosphate, and then with the resultant geranylpyrophosphate to the ultimate product farnesyl pyrophosphate. This is Farnesyl pyrophosphate synthase (FPS) from Zea mays (Maize).